The following is a 241-amino-acid chain: Enterotoxin type H (241 aa).

The N-terminal stretch at 1–24 is a signal peptide; it reads MINKIKILFSFLALLLSFTSYAKA. A disulfide bridge links Cys-106 with Cys-116. Zn(2+)-binding residues include Asp-191, His-230, and Asp-232.

Belongs to the staphylococcal/streptococcal toxin family. As to quaternary structure, interacts with host MHC class II molecules composed of alpha/HLA-DRA and beta/HLA-DRB1 chains. Interacts with host TCR alpha-chain TRAV27. Zn(2+) serves as cofactor.

It is found in the secreted. Its function is as follows. Staphylococcal enterotoxin that activates the host immune system by binding as unprocessed molecules to major histocompatibility (MHC) complex class II and T-cell receptor (TCR) molecules via their alpha domain, in particular TRAV27. In turn, this ternary complex activates a large number of T-lymphocytes initiating a systemic release of pro-inflammatory cytokines. Also causes the intoxication staphylococcal food poisoning syndrome. The illness characterized by high fever, hypotension, diarrhea, shock, and in some cases death. This chain is Enterotoxin type H (entH), found in Staphylococcus aureus.